Reading from the N-terminus, the 453-residue chain is Citrate (Re)-synthase (453 aa).

A Pyruvate carboxyltransferase domain is found at Ile46–Thr316.

Belongs to the alpha-IPM synthase/homocitrate synthase family. The cofactor is Mn(2+). It depends on Co(2+) as a cofactor. Mg(2+) is required as a cofactor.

It catalyses the reaction oxaloacetate + acetyl-CoA + H2O = citrate + CoA + H(+). Its activity is regulated as follows. Inhibited by p-chloromercuribenzoate (pCMB), EDTA, Zn(2+) ions, and under aerobic conditions. Functionally, catalyzes the condensation of the acetyl group of acetyl-CoA with oxaloacetate to form citrate. This enzyme is highly Re-face stereospecific with respect to the C-2 of oxaloacetate. The protein is Citrate (Re)-synthase of Clostridium kluyveri (strain ATCC 8527 / DSM 555 / NBRC 12016 / NCIMB 10680 / K1).